We begin with the raw amino-acid sequence, 293 residues long: Protease HtpX (293 aa).

A run of 2 helical transmembrane segments spans residues I4–L24 and V32–L52. H139 contributes to the Zn(2+) binding site. E140 is a catalytic residue. H143 is a binding site for Zn(2+). The next 2 helical transmembrane spans lie at I158–M178 and M193–I213. E222 is a binding site for Zn(2+).

This sequence belongs to the peptidase M48B family. Requires Zn(2+) as cofactor.

The protein resides in the cell inner membrane. This is Protease HtpX from Erwinia tasmaniensis (strain DSM 17950 / CFBP 7177 / CIP 109463 / NCPPB 4357 / Et1/99).